Here is an 81-residue protein sequence, read N- to C-terminus: Photosystem I iron-sulfur center (81 aa).

2 4Fe-4S ferredoxin-type domains span residues 2–31 (AHSVKVYDTCIGCTQCVRACPCDVLEMVPR) and 39–68 (IASAPRTEDCIGCKRCETACPTDFLSVRVY). 8 residues coordinate [4Fe-4S] cluster: cysteine 11, cysteine 14, cysteine 17, cysteine 21, cysteine 48, cysteine 51, cysteine 54, and cysteine 58.

The eukaryotic PSI reaction center is composed of at least 11 subunits. Requires [4Fe-4S] cluster as cofactor.

Its subcellular location is the plastid. It is found in the chloroplast thylakoid membrane. The enzyme catalyses reduced [plastocyanin] + hnu + oxidized [2Fe-2S]-[ferredoxin] = oxidized [plastocyanin] + reduced [2Fe-2S]-[ferredoxin]. Apoprotein for the two 4Fe-4S centers FA and FB of photosystem I (PSI); essential for photochemical activity. FB is the terminal electron acceptor of PSI, donating electrons to ferredoxin. The C-terminus interacts with PsaA/B/D and helps assemble the protein into the PSI complex. Required for binding of PsaD and PsaE to PSI. PSI is a plastocyanin/cytochrome c6-ferredoxin oxidoreductase, converting photonic excitation into a charge separation, which transfers an electron from the donor P700 chlorophyll pair to the spectroscopically characterized acceptors A0, A1, FX, FA and FB in turn. In Antithamnion sp. (Red alga), this protein is Photosystem I iron-sulfur center.